Consider the following 485-residue polypeptide: Zinc finger protein 165 (485 aa).

Residue lysine 23 forms a Glycyl lysine isopeptide (Lys-Gly) (interchain with G-Cter in SUMO2) linkage. The 66-residue stretch at 62–127 (GPREALSRLR…EEAVTILEDL (66 aa)) folds into the SCAN box domain. Glycyl lysine isopeptide (Lys-Gly) (interchain with G-Cter in SUMO2) cross-links involve residues lysine 162 and lysine 195. The C2H2-type 1; degenerate zinc finger occupies 290–314 (KSCKHGTCDQSFKWNSDFINHQIIY). C2H2-type zinc fingers lie at residues 344-366 (HQCN…QRIH), 372-394 (YECN…RRIH), 400-422 (FGCK…QRIH), 428-450 (YECS…FRIH), and 456-478 (YECS…QRIH).

This sequence belongs to the krueppel C2H2-type zinc-finger protein family. Expressed specifically in testis.

It localises to the nucleus. Its function is as follows. May be involved in transcriptional regulation. The polypeptide is Zinc finger protein 165 (ZNF165) (Homo sapiens (Human)).